Consider the following 920-residue polypeptide: Zinc finger MIZ domain-containing protein 2 (920 aa).

Disordered stretches follow at residues Met1–Ala22 and Ser54–Gly79. A compositionally biased stretch (low complexity) spans Pro60–Gly79. Arg111 carries the omega-N-methylarginine modification. Disordered regions lie at residues Gly243–Val265 and Pro286–Gln391. Asymmetric dimethylarginine occurs at positions 245 and 262. A compositionally biased stretch (pro residues) spans Pro295 to Ser304. Residues Glu334–Gly354 are compositionally biased toward polar residues. Pro residues predominate over residues Pro366–Thr379. The span at Pro380–Pro389 shows a compositional bias: low complexity. Glycyl lysine isopeptide (Lys-Gly) (interchain with G-Cter in SUMO2) cross-links involve residues Lys402 and Lys457. Residues Pro435 to Ser506 form an interaction with AR region. Residues Gly585–Glu671 form an SP-RING-type zinc finger. Positions 616, 618, 639, and 642 each coordinate Zn(2+). Lys692 participates in a covalent cross-link: Glycyl lysine isopeptide (Lys-Gly) (interchain with G-Cter in SUMO2). A disordered region spans residues Ser803–Asn920. Residues Ala876–Leu890 show a composition bias toward low complexity. Polar residues predominate over residues Pro906–Asn920.

In terms of assembly, interacts with AR, SMARCA4/BRG1 and SMARCE1/BAF57. Interaction with either SMARCA4 and SMARCE1 enhances AR-mediated transcription. Expressed most abundantly in testis with lower levels in heart, brain, pancreas, prostate and ovary.

The protein localises to the nucleus. Increases ligand-dependent transcriptional activity of AR and other nuclear hormone receptors. In Homo sapiens (Human), this protein is Zinc finger MIZ domain-containing protein 2 (ZMIZ2).